A 969-amino-acid chain; its full sequence is RNA polymerase-associated protein RapA (969 aa).

Positions 162-339 (EVGQRVAPRV…FARLALLDAD (178 aa)) constitute a Helicase ATP-binding domain. 175–182 (DEVGLGKT) contacts ATP. The DEAH box motif lies at 285 to 288 (DEAH). The Helicase C-terminal domain maps to 492 to 663 (RIEWLITFLK…GFLKNPQAVG (172 aa)).

This sequence belongs to the SNF2/RAD54 helicase family. RapA subfamily. Interacts with the RNAP. Has a higher affinity for the core RNAP than for the holoenzyme. Its ATPase activity is stimulated by binding to RNAP.

Functionally, transcription regulator that activates transcription by stimulating RNA polymerase (RNAP) recycling in case of stress conditions such as supercoiled DNA or high salt concentrations. Probably acts by releasing the RNAP, when it is trapped or immobilized on tightly supercoiled DNA. Does not activate transcription on linear DNA. Probably not involved in DNA repair. The protein is RNA polymerase-associated protein RapA of Actinobacillus pleuropneumoniae serotype 7 (strain AP76).